The sequence spans 379 residues: UDP-4-amino-4-deoxy-L-arabinose--oxoglutarate aminotransferase (379 aa).

Residue K182 is modified to N6-(pyridoxal phosphate)lysine.

Belongs to the DegT/DnrJ/EryC1 family. ArnB subfamily. In terms of assembly, homodimer. Pyridoxal 5'-phosphate is required as a cofactor.

The catalysed reaction is UDP-4-amino-4-deoxy-beta-L-arabinose + 2-oxoglutarate = UDP-beta-L-threo-pentopyranos-4-ulose + L-glutamate. It functions in the pathway nucleotide-sugar biosynthesis; UDP-4-deoxy-4-formamido-beta-L-arabinose biosynthesis; UDP-4-deoxy-4-formamido-beta-L-arabinose from UDP-alpha-D-glucuronate: step 2/3. The protein operates within bacterial outer membrane biogenesis; lipopolysaccharide biosynthesis. Functionally, catalyzes the conversion of UDP-4-keto-arabinose (UDP-Ara4O) to UDP-4-amino-4-deoxy-L-arabinose (UDP-L-Ara4N). The modified arabinose is attached to lipid A and is required for resistance to polymyxin and cationic antimicrobial peptides. In Escherichia coli O1:K1 / APEC, this protein is UDP-4-amino-4-deoxy-L-arabinose--oxoglutarate aminotransferase.